The primary structure comprises 407 residues: Inhibin beta B chain (407 aa).

Residues 1-28 form the signal peptide; that stretch reads MDGLPGRALGAACLLLLAAGWLGPEAWG. The segment at 27–60 is disordered; sequence WGSPTPPPSPAAPPPPPPPGALGGSQDTCTSCGG. The propeptide occupies 29–292; sequence SPTPPPSPAA…VDSRHRIRKR (264 aa). Residues 30–46 show a composition bias toward pro residues; the sequence is PTPPPSPAAPPPPPPPG. N-linked (GlcNAc...) asparagine glycosylation is present at asparagine 93. 4 cysteine pairs are disulfide-bonded: cysteine 296-cysteine 304, cysteine 303-cysteine 372, cysteine 332-cysteine 404, and cysteine 336-cysteine 406.

It belongs to the TGF-beta family. As to quaternary structure, dimeric, linked by one or more disulfide bonds. Inhibin B is a dimer of alpha and beta-B. Activin B is a homodimer of beta-B. Activin AB is a dimer of beta-A and beta-B. Interacts with FST and FSTL3.

The protein resides in the secreted. Its function is as follows. Inhibins and activins inhibit and activate, respectively, the secretion of follitropin by the pituitary gland. Inhibins/activins are involved in regulating a number of diverse functions such as hypothalamic and pituitary hormone secretion, gonadal hormone secretion, germ cell development and maturation, erythroid differentiation, insulin secretion, nerve cell survival, embryonic axial development or bone growth, depending on their subunit composition. Inhibins appear to oppose the functions of activins. Functionally, activin B is a dimer of alpha and beta-B that plays a role in several essential biological processes including embryonic development, stem cell maintenance and differentiation, haematopoiesis, cell proliferation and wound healing. Signals through type I receptor ACVR1C, abundantly expressed in pancreatic beta cells, and type II receptors like ACVR2A. Upon ligand binding, these receptors phosphorylate intracellular signaling mediators SMAD2 and SMAD3, which form a complex with SMAD4, translocate to the nucleus, and regulate gene expression. Plays a crucial role in the induction of hepcidin by inflammation through activation of ACVR1C and subsequent phosphorylation of SMAD1/5/8. Regulates adipocyte lipid metabolism by decreasing non-esterified fatty acids and glycerol release and increases intracellular triglyceride content. Stimulates wound healing by promoting cell migration and hair follicle regeneration through the JNK and ERK signaling pathways downstream of RHOA. Inhibin B is a dimer of alpha and beta-B that plays a crucial role in the regulation of the reproductive system by inhibiting the secretion of follicle-stimulating hormone (FSH) from the anterior pituitary gland. Thereby, maintains reproductive homeostasis in both males and females. Acts as a more potent suppressor of FSH release than inhibin A. Functions as competitive receptor antagonist binding activin type II receptors with high affinity in the presence of the TGF-beta type III coreceptor/TGFBR3L. In Sus scrofa (Pig), this protein is Inhibin beta B chain (INHBB).